A 391-amino-acid chain; its full sequence is Phosphoglycerate kinase (391 aa).

Residues 21-23 (DLN), Arg36, 59-62 (HLGR), Arg113, and Arg146 each bind substrate. ATP contacts are provided by residues Lys197, Glu319, and 345–348 (GGDT).

It belongs to the phosphoglycerate kinase family. As to quaternary structure, monomer.

It is found in the cytoplasm. It catalyses the reaction (2R)-3-phosphoglycerate + ATP = (2R)-3-phospho-glyceroyl phosphate + ADP. It functions in the pathway carbohydrate degradation; glycolysis; pyruvate from D-glyceraldehyde 3-phosphate: step 2/5. In Shewanella frigidimarina (strain NCIMB 400), this protein is Phosphoglycerate kinase.